The chain runs to 292 residues: MAITAALVKELRERTGAGMMDCKKALQEVDGDMEAAIELMRKSGQAKAAKKAGRVAAEGVILVKSEGNQATLVELNCETDFVARDDSFLEFGDKVINAAFANKENDVEALKTTDIDGQTVEKTREDLVAKIGENMNVRRVQTLEAGDVVATYTHGARIGVAVALTGGDEDLARDLCMHVAASSPQFVKPEDVAAEVVEKERSIQVDIAMQSGKPKEIAEKMVEGRMRKFTGEISLTGQPFVKDPSMTVGELLKKAGADVVTFVRFEVGEGIERKEEDFASEVQAQVAAASKG.

Positions 79-82 (TDFV) are involved in Mg(2+) ion dislocation from EF-Tu.

The protein belongs to the EF-Ts family.

The protein resides in the cytoplasm. Associates with the EF-Tu.GDP complex and induces the exchange of GDP to GTP. It remains bound to the aminoacyl-tRNA.EF-Tu.GTP complex up to the GTP hydrolysis stage on the ribosome. The chain is Elongation factor Ts (tsf) from Idiomarina loihiensis (strain ATCC BAA-735 / DSM 15497 / L2-TR).